A 212-amino-acid chain; its full sequence is Redox-sensing transcriptional repressor Rex (212 aa).

The H-T-H motif DNA-binding region spans 16–55; that stretch reads IYYRYLNILLDADKTRVSSTELSEAVKVDSATIRRDFSYF. 90 to 95 provides a ligand contact to NAD(+); it reads GVGNLG.

It belongs to the transcriptional regulatory Rex family. In terms of assembly, homodimer.

The protein localises to the cytoplasm. Its function is as follows. Modulates transcription in response to changes in cellular NADH/NAD(+) redox state. The sequence is that of Redox-sensing transcriptional repressor Rex from Levilactobacillus brevis (strain ATCC 367 / BCRC 12310 / CIP 105137 / JCM 1170 / LMG 11437 / NCIMB 947 / NCTC 947) (Lactobacillus brevis).